The following is a 163-amino-acid chain: MSKTSVIYPGTFDPITNGHVDLVTRASRMFDEVVVAIAIGHHKNPLFSLEERVALAQSSLGHLSNVEFVGFDGLLVNFFKEQKATAVLRGLRAVSDFEYEFQLANMNRQLDPHFEAVFLTPSEQYSFISSTLIREIARLKGDVTKFVPQAVVEAFERKHQQGW.

Thr11 serves as a coordination point for substrate. Residues 11-12 and His19 each bind ATP; that span reads TF. Substrate contacts are provided by Lys43, Leu75, and Arg89. Residues 90 to 92, Glu100, and 125 to 131 contribute to the ATP site; these read GLR and YSFISST.

The protein belongs to the bacterial CoaD family. As to quaternary structure, homohexamer. It depends on Mg(2+) as a cofactor.

Its subcellular location is the cytoplasm. It carries out the reaction (R)-4'-phosphopantetheine + ATP + H(+) = 3'-dephospho-CoA + diphosphate. Its pathway is cofactor biosynthesis; coenzyme A biosynthesis; CoA from (R)-pantothenate: step 4/5. Functionally, reversibly transfers an adenylyl group from ATP to 4'-phosphopantetheine, yielding dephospho-CoA (dPCoA) and pyrophosphate. This Acinetobacter baumannii (strain SDF) protein is Phosphopantetheine adenylyltransferase.